The chain runs to 776 residues: Endonuclease MutS2 (776 aa).

330–337 serves as a coordination point for ATP; the sequence is GPNTGGKT. One can recognise a Smr domain in the interval 701 to 776; it reads LDLRGMRYEE…GSGATIAILK (76 aa).

This sequence belongs to the DNA mismatch repair MutS family. MutS2 subfamily. In terms of assembly, homodimer. Binds to stalled ribosomes, contacting rRNA.

Its function is as follows. Endonuclease that is involved in the suppression of homologous recombination and thus may have a key role in the control of bacterial genetic diversity. Acts as a ribosome collision sensor, splitting the ribosome into its 2 subunits. Detects stalled/collided 70S ribosomes which it binds and splits by an ATP-hydrolysis driven conformational change. Acts upstream of the ribosome quality control system (RQC), a ribosome-associated complex that mediates the extraction of incompletely synthesized nascent chains from stalled ribosomes and their subsequent degradation. Probably generates substrates for RQC. This Lactococcus lactis subsp. cremoris (strain SK11) protein is Endonuclease MutS2.